Here is a 334-residue protein sequence, read N- to C-terminus: Dihydroorotate dehydrogenase (quinone) (334 aa).

FMN is bound by residues 61–65 (AGLDK) and T85. K65 is a binding site for substrate. 110 to 114 (NRMGF) provides a ligand contact to substrate. FMN is bound by residues N138 and N171. N171 lines the substrate pocket. S174 serves as the catalytic Nucleophile. Residue N176 participates in substrate binding. Residues K216 and T244 each coordinate FMN. 245-246 (NT) is a substrate binding site. FMN contacts are provided by residues G266, G295, and 316 to 317 (YT).

It belongs to the dihydroorotate dehydrogenase family. Type 2 subfamily. As to quaternary structure, monomer. Requires FMN as cofactor.

The protein resides in the cell membrane. It catalyses the reaction (S)-dihydroorotate + a quinone = orotate + a quinol. Its pathway is pyrimidine metabolism; UMP biosynthesis via de novo pathway; orotate from (S)-dihydroorotate (quinone route): step 1/1. Catalyzes the conversion of dihydroorotate to orotate with quinone as electron acceptor. This Idiomarina loihiensis (strain ATCC BAA-735 / DSM 15497 / L2-TR) protein is Dihydroorotate dehydrogenase (quinone).